Consider the following 363-residue polypeptide: Phosphoserine aminotransferase (363 aa).

Position 42 (R42) interacts with L-glutamate. Residues 76–77 (AS), W101, T151, D170, and Q193 each bind pyridoxal 5'-phosphate. An N6-(pyridoxal phosphate)lysine modification is found at K194. 234–235 (NT) is a pyridoxal 5'-phosphate binding site.

The protein belongs to the class-V pyridoxal-phosphate-dependent aminotransferase family. SerC subfamily. In terms of assembly, homodimer. The cofactor is pyridoxal 5'-phosphate.

It localises to the cytoplasm. The catalysed reaction is O-phospho-L-serine + 2-oxoglutarate = 3-phosphooxypyruvate + L-glutamate. The enzyme catalyses 4-(phosphooxy)-L-threonine + 2-oxoglutarate = (R)-3-hydroxy-2-oxo-4-phosphooxybutanoate + L-glutamate. It functions in the pathway amino-acid biosynthesis; L-serine biosynthesis; L-serine from 3-phospho-D-glycerate: step 2/3. Functionally, catalyzes the reversible conversion of 3-phosphohydroxypyruvate to phosphoserine and of 3-hydroxy-2-oxo-4-phosphonooxybutanoate to phosphohydroxythreonine. In Listeria monocytogenes serovar 1/2a (strain ATCC BAA-679 / EGD-e), this protein is Phosphoserine aminotransferase.